Here is a 129-residue protein sequence, read N- to C-terminus: Small ribosomal subunit protein uS9 (129 aa).

This sequence belongs to the universal ribosomal protein uS9 family.

In Helicobacter pylori (strain HPAG1), this protein is Small ribosomal subunit protein uS9.